Reading from the N-terminus, the 247-residue chain is tRNA uridine(34) hydroxylase (247 aa).

Residues 124-218 (TKQDVIVIDT…YLEDTQNKNN (95 aa)) enclose the Rhodanese domain. Catalysis depends on Cys-178, which acts as the Cysteine persulfide intermediate.

This sequence belongs to the TrhO family.

The catalysed reaction is uridine(34) in tRNA + AH2 + O2 = 5-hydroxyuridine(34) in tRNA + A + H2O. Its function is as follows. Catalyzes oxygen-dependent 5-hydroxyuridine (ho5U) modification at position 34 in tRNAs. The sequence is that of tRNA uridine(34) hydroxylase from Rickettsia rickettsii (strain Iowa).